Here is a 143-residue protein sequence, read N- to C-terminus: Peptide methionine sulfoxide reductase MsrB (143 aa).

The MsrB domain occupies 5–127 (NEELKKKLTP…NSAALRFIPK (123 aa)). Cysteine 116 serves as the catalytic Nucleophile.

Belongs to the MsrB Met sulfoxide reductase family.

The enzyme catalyses L-methionyl-[protein] + [thioredoxin]-disulfide + H2O = L-methionyl-(R)-S-oxide-[protein] + [thioredoxin]-dithiol. This is Peptide methionine sulfoxide reductase MsrB from Halalkalibacterium halodurans (strain ATCC BAA-125 / DSM 18197 / FERM 7344 / JCM 9153 / C-125) (Bacillus halodurans).